Here is a 171-residue protein sequence, read N- to C-terminus: Shikimate kinase (171 aa).

Residue 14-19 coordinates ATP; the sequence is GAGKST. Ser-18 contributes to the Mg(2+) binding site. 3 residues coordinate substrate: Asp-36, Arg-60, and Gly-82. Arg-120 provides a ligand contact to ATP. Arg-139 lines the substrate pocket. Gln-156 contacts ATP.

The protein belongs to the shikimate kinase family. As to quaternary structure, monomer. It depends on Mg(2+) as a cofactor.

It is found in the cytoplasm. The catalysed reaction is shikimate + ATP = 3-phosphoshikimate + ADP + H(+). The protein operates within metabolic intermediate biosynthesis; chorismate biosynthesis; chorismate from D-erythrose 4-phosphate and phosphoenolpyruvate: step 5/7. Its function is as follows. Catalyzes the specific phosphorylation of the 3-hydroxyl group of shikimic acid using ATP as a cosubstrate. The chain is Shikimate kinase from Psychromonas ingrahamii (strain DSM 17664 / CCUG 51855 / 37).